We begin with the raw amino-acid sequence, 471 residues long: Adenosylhomocysteinase (471 aa).

Substrate is bound by residues Thr58, Asp133, and Glu195. 196–198 (TTT) contributes to the NAD(+) binding site. The substrate site is built by Lys225 and Asp229. Residues Asn230, 259 to 264 (GFGDVG), Glu282, Asn317, 338 to 340 (IGH), and Asn383 contribute to the NAD(+) site.

The protein belongs to the adenosylhomocysteinase family. It depends on NAD(+) as a cofactor.

It is found in the cytoplasm. It carries out the reaction S-adenosyl-L-homocysteine + H2O = L-homocysteine + adenosine. The protein operates within amino-acid biosynthesis; L-homocysteine biosynthesis; L-homocysteine from S-adenosyl-L-homocysteine: step 1/1. May play a key role in the regulation of the intracellular concentration of adenosylhomocysteine. The protein is Adenosylhomocysteinase of Rhodopseudomonas palustris (strain BisB5).